Consider the following 312-residue polypeptide: Glyoxylate/hydroxypyruvate reductase A (312 aa).

R227 is an active-site residue. The Proton donor role is filled by H275.

It belongs to the D-isomer specific 2-hydroxyacid dehydrogenase family. GhrA subfamily.

It localises to the cytoplasm. The enzyme catalyses glycolate + NADP(+) = glyoxylate + NADPH + H(+). It carries out the reaction (R)-glycerate + NAD(+) = 3-hydroxypyruvate + NADH + H(+). It catalyses the reaction (R)-glycerate + NADP(+) = 3-hydroxypyruvate + NADPH + H(+). Its function is as follows. Catalyzes the NADPH-dependent reduction of glyoxylate and hydroxypyruvate into glycolate and glycerate, respectively. In Shigella dysenteriae serotype 1 (strain Sd197), this protein is Glyoxylate/hydroxypyruvate reductase A.